Consider the following 149-residue polypeptide: 3-dehydroquinate dehydratase (149 aa).

Y22 (proton acceptor) is an active-site residue. Residues N73, H79, and D86 each coordinate substrate. Residue H99 is the Proton donor of the active site. Substrate contacts are provided by residues 100 to 101 and R110; that span reads LS.

The protein belongs to the type-II 3-dehydroquinase family. As to quaternary structure, homododecamer.

It catalyses the reaction 3-dehydroquinate = 3-dehydroshikimate + H2O. It participates in metabolic intermediate biosynthesis; chorismate biosynthesis; chorismate from D-erythrose 4-phosphate and phosphoenolpyruvate: step 3/7. In terms of biological role, catalyzes a trans-dehydration via an enolate intermediate. In Prochlorococcus marinus (strain SARG / CCMP1375 / SS120), this protein is 3-dehydroquinate dehydratase.